The primary structure comprises 76 residues: Small ribosomal subunit protein bS18 (76 aa).

It belongs to the bacterial ribosomal protein bS18 family. In terms of assembly, part of the 30S ribosomal subunit. Forms a tight heterodimer with protein bS6.

Binds as a heterodimer with protein bS6 to the central domain of the 16S rRNA, where it helps stabilize the platform of the 30S subunit. The chain is Small ribosomal subunit protein bS18 from Methylococcus capsulatus (strain ATCC 33009 / NCIMB 11132 / Bath).